The chain runs to 571 residues: Potassium-transporting ATPase potassium-binding subunit (571 aa).

The next 10 membrane-spanning stretches (helical) occupy residues 7 to 27 (LQFA…GGYL), 66 to 86 (TYAL…YGIA), 137 to 157 (GLAV…AALI), 188 to 208 (FVVA…GFIV), 255 to 275 (IGNF…CFAF), 286 to 306 (WAVL…AMSF), 390 to 410 (VGLN…GLMV), 430 to 450 (TLYI…SVLI), 497 to 517 (IGVA…AIAG), and 538 to 558 (LFVG…FFPA).

Belongs to the KdpA family. The system is composed of three essential subunits: KdpA, KdpB and KdpC.

Its subcellular location is the cell membrane. Part of the high-affinity ATP-driven potassium transport (or Kdp) system, which catalyzes the hydrolysis of ATP coupled with the electrogenic transport of potassium into the cytoplasm. This subunit binds the extracellular potassium ions and delivers the ions to the membrane domain of KdpB through an intramembrane tunnel. In Mycobacterium bovis (strain ATCC BAA-935 / AF2122/97), this protein is Potassium-transporting ATPase potassium-binding subunit.